Consider the following 595-residue polypeptide: Putative lipase atg15 (595 aa).

Topologically, residues 1-20 (MKGLRGHNKKSFWGNTRLSD) are cytoplasmic. Residues 21 to 41 (LLWPVTLLPGLISAYQPVYLG) form a helical; Signal-anchor for type II membrane protein membrane-spanning segment. Topologically, residues 42–595 (SRQSSPFLPP…TTTGKHLGRF (554 aa)) are lumenal. N-linked (GlcNAc...) asparagine glycosylation is found at N164, N199, N221, N279, and N303. S319 serves as the catalytic Charge relay system. N465 is a glycosylation site (N-linked (GlcNAc...) asparagine).

This sequence belongs to the AB hydrolase superfamily. Lipase family. Binds to both phosphatidylinositol (PI) and phosphatidylinositol 3,5-bisphosphate (PIP2).

It localises to the endosome. The protein resides in the multivesicular body membrane. It is found in the prevacuolar compartment membrane. It catalyses the reaction a triacylglycerol + H2O = a diacylglycerol + a fatty acid + H(+). Functionally, lipase which is essential for lysis of subvacuolar cytoplasm to vacuole targeted bodies and intravacuolar autophagic bodies. Involved in the lysis of intravacuolar multivesicular body (MVB) vesicles. The intravacuolar membrane disintegration by atg15 is critical to life span extension. This chain is Putative lipase atg15 (atg15), found in Aspergillus niger (strain ATCC MYA-4892 / CBS 513.88 / FGSC A1513).